We begin with the raw amino-acid sequence, 473 residues long: Cannabinoid receptor 1 (473 aa).

Residues 1–121 (MKSILDGLAD…LNPSQQLAIA (121 aa)) lie on the Extracellular side of the membrane. The tract at residues 2–23 (KSILDGLADTTFRTITTDLLYV) is required for mitochondrial localization. Asn78 and Asn84 each carry an N-linked (GlcNAc...) asparagine glycan. The chain crosses the membrane as a helical span at residues 122 to 142 (VLSLTLGTFTVLENLLVLCVI). Over 143–155 (LHSRSLRCRPSYH) the chain is Cytoplasmic. A helical transmembrane segment spans residues 156 to 176 (FIGSLAVADLLGSVIFVYSFV). Residues 177-188 (DFHVFHRKDSPN) are Extracellular-facing. Residues 189–209 (VFLFKLGGVTASFTASVGSLF) traverse the membrane as a helical segment. Topologically, residues 210 to 233 (LTAIDRYISIHRPLAYKRIVTRPK) are cytoplasmic. Residues 234 to 254 (AVVAFCLMWTIAIVIAVLPLL) form a helical membrane-spanning segment. Residues 255-278 (GWNCKKLQSVCSDIFPLIDETYLM) lie on the Extracellular side of the membrane. The chain crosses the membrane as a helical span at residues 279-299 (FWIGVTSVLLLFIVYAYMYIL). Topologically, residues 300 to 345 (WKAHSHAVRMIQRGTQKSIIIHTSEDGKVQVTRPDQARMDIRLAKT) are cytoplasmic. The chain crosses the membrane as a helical span at residues 346–366 (LVLILVVLIICWGPLLAIMVY). At 367–378 (DVFGKMNKLIKT) the chain is on the extracellular side. The chain crosses the membrane as a helical span at residues 379–399 (VFAFCSMLCLLNSTVNPIIYA). Over 400 to 473 (LRSKDLRHAF…VSTDTSAEAL (74 aa)) the chain is Cytoplasmic. The S-palmitoyl cysteine moiety is linked to residue Cys416. Phosphoserine is present on residues Ser426 and Ser430.

Belongs to the G-protein coupled receptor 1 family. Interacts (via C-terminus) with CNRIP1. Associates with G protein alpha subunits, including G(i) alpha-1/GNAI1, G(i) alpha-3/GNAI3 and G(o)-alpha/GNAO1; palmitoylation is important for interaction with GNAI3 and GNAO1. Post-translationally, palmitoylation at Cys-416 is important for recruitment at both plasma membrane and lipid rafts and association with G protein alpha subunits. In terms of tissue distribution, expressed in brain neurons (at protein level). Detected throughout the striatum, cortex and hippocampus, with highest levels in the lateral striatum. In rostral brain regions, high expression levels in the dorsal lateral striatum, while in the caudal brain regions, high levels are observed in the ventral lateral striatum. Expressed in neurons. In the hypothalamus, expressed in both GABAergic and glutamatergic presynaptic terminals of POMC neurons (at protein level). Expressed in striated muscles, including skeletal muscles (gastrocnemius and rectus abdominis) and myocardium (at protein level). Expressed in the liver, with highest levels in Kupffer cells and lower levels in endothelial cells as well as hepatocytes, particularly in perivascular areas (at protein level). The hepatic expression level is up-regulated in obese mice compared to lean animals.

The protein localises to the cell membrane. It localises to the mitochondrion outer membrane. It is found in the cell projection. The protein resides in the axon. Its subcellular location is the presynapse. Hemopressin, a peptide derived from hemoglobin subunit alpha (HBA1 and/or HBA2), acts as an antagonist peptide: hemopressin-binding efficiently blocks cannabinoid receptor CNR1 and subsequent signaling. Functionally, G-protein coupled receptor for cannabinoids, including endocannabinoids (eCBs), such as N-arachidonoylethanolamide (also called anandamide or AEA) and 2-arachidonoylglycerol (2-AG). Mediates many cannabinoid-induced effects, acting, among others, on food intake, memory loss, gastrointestinal motility, catalepsy, ambulatory activity, anxiety, chronic pain. Signaling typically involves reduction in cyclic AMP. In the hypothalamus, may have a dual effect on mitochondrial respiration depending upon the agonist dose and possibly upon the cell type. Increases respiration at low doses, while decreases respiration at high doses. At high doses, CNR1 signal transduction involves G-protein alpha-i protein activation and subsequent inhibition of mitochondrial soluble adenylate cyclase, decrease in cyclic AMP concentration, inhibition of protein kinase A (PKA)-dependent phosphorylation of specific subunits of the mitochondrial electron transport system, including NDUFS2. In the hypothalamus, inhibits leptin-induced reactive oxygen species (ROS) formation and mediates cannabinoid-induced increase in SREBF1 and FASN gene expression. In response to cannabinoids, drives the release of orexigenic beta-endorphin, but not that of melanocyte-stimulating hormone alpha/alpha-MSH, from hypothalamic POMC neurons, hence promoting food intake. In the hippocampus, regulates cellular respiration and energy production in response to cannabinoids. Involved in cannabinoid-dependent depolarization-induced suppression of inhibition (DSI), a process in which depolarization of CA1 postsynaptic pyramidal neurons mobilizes eCBs, which retrogradely activate presynaptic CB1 receptors, transiently decreasing GABAergic inhibitory neurotransmission. Also reduces excitatory synaptic transmission. In superior cervical ganglions and cerebral vascular smooth muscle cells, inhibits voltage-gated Ca(2+) channels in a constitutive, as well as agonist-dependent manner. In cerebral vascular smooth muscle cells, cannabinoid-induced inhibition of voltage-gated Ca(2+) channels leads to vasodilation and decreased vascular tone. Induces leptin production in adipocytes and reduces LRP2-mediated leptin clearance in the kidney, hence participating in hyperleptinemia. In adipose tissue, CNR1 signaling leads to increased expression of SREBF1, ACACA and FASN genes. In the liver, activation by endocannabinoids leads to increased de novo lipogenesis and reduced fatty acid catabolism, associated with increased expression of SREBF1/SREBP-1, GCK, ACACA, ACACB and FASN genes. May also affect de novo cholesterol synthesis and HDL-cholesteryl ether uptake. Peripherally modulates energy metabolism. In high carbohydrate diet-induced obesity, may decrease the expression of mitochondrial dihydrolipoyl dehydrogenase/DLD in striated muscles, as well as that of selected glucose/ pyruvate metabolic enzymes, hence affecting energy expenditure through mitochondrial metabolism. In response to cannabinoid anandamide, elicits a pro-inflammatory response in macrophages, which involves NLRP3 inflammasome activation and IL1B and IL18 secretion. In macrophages infiltrating pancreatic islets, this process may participate in the progression of type-2 diabetes and associated loss of pancreatic beta-cells. In Mus musculus (Mouse), this protein is Cannabinoid receptor 1 (Cnr1).